Reading from the N-terminus, the 287-residue chain is MAFSPNVLLGGRVCAAVARSGFATRRVTIPGSTSREPDPDFDWEPEERELQEVESALKRQKKAIRFQKIRRQMEASGAPPRTLTWEAMEQIRYLHREFSESWSVPRLAEGFDVSTDVIRRVLKSKFIPTLEQKLKQDQKVLKKIGLARSIPELPGPGDSSKPLSAGQSVSGSLLIPGDEASSRGHGHSTALKAIELNTQSTNITTRQTERNKGVQGLEEGKDFVPVAAGHPTSTCRGARGIDSDGLPSDKRLEELKAGEAGDQIFSKRVVQRGREFFDSNGNFLYRI.

The signal sequence occupies residues 1–23; sequence MAFSPNVLLGGRVCAAVARSGFA. The interval 149-169 is disordered; that stretch reads SIPELPGPGDSSKPLSAGQSV. N202 carries N-linked (GlcNAc...) asparagine glycosylation.

Belongs to the neugrin family. Forms a regulatory protein-RNA complex, consisting of RCC1L, NGRN, RPUSD3, RPUSD4, TRUB2, FASTKD2 and 16S mt-rRNA. Interacts with 16S mt-rRNA; this interaction is direct.

The protein localises to the nucleus. It localises to the secreted. The protein resides in the mitochondrion membrane. Its function is as follows. Plays an essential role in mitochondrial ribosome biogenesis. As a component of a functional protein-RNA module, consisting of RCC1L, NGRN, RPUSD3, RPUSD4, TRUB2, FASTKD2 and 16S mitochondrial ribosomal RNA (16S mt-rRNA), controls 16S mt-rRNA abundance and is required for intra-mitochondrial translation of core subunits of the oxidative phosphorylation system. This chain is Neugrin (NGRN), found in Bos taurus (Bovine).